Here is a 470-residue protein sequence, read N- to C-terminus: Nuclear receptor subfamily 0 group B member 1 (470 aa).

3 consecutive repeat copies span residues 1-67 (MAGE…YRCC), 68-133 (FCGK…YRCC), and 134-200 (FCGE…YRCC). The tract at residues 1-253 (MAGEDHQWQG…RPVALKNPQV (253 aa)) is 4 X 67 AA tandem repeats. 3 consecutive short sequence motifs (LXXLL motif) follow at residues 13–17 (LYNML), 80–84 (LYSML), and 146–150 (LYSLL). A 4; truncated repeat occupies 201 to 253 (FCGEDQPQQGSTLYSMPTSTNQTPAAPEERPGAPWWDTSCGALRPVALKNPQV). Residues 205–469 (DQPQQGSTLY…DMMLEMLCTK (265 aa)) form the NR LBD domain. Residues 461–466 (MMLEML) carry the AF-2 motif motif.

Belongs to the nuclear hormone receptor family. NR0 subfamily. As to quaternary structure, homodimer. Interacts with NR5A1, NR5A2, NR0B2 and with COPS2. Interacts with ESRRB; represses ESRRB activity at the GATA6 promoter.

The protein localises to the nucleus. Its subcellular location is the cytoplasm. In terms of biological role, nuclear receptor that lacks a DNA-binding domain and acts as a corepressor that inhibits the transcriptional activity of other nuclear receptors through heterodimeric interactions. Component of a cascade required for the development of the hypothalamic-pituitary-adrenal-gonadal axis. May also have a role in the development of the embryo and in the maintenance of embryonic stem cell pluripotency. This is Nuclear receptor subfamily 0 group B member 1 (NR0B1) from Callithrix jacchus (White-tufted-ear marmoset).